A 1266-amino-acid polypeptide reads, in one-letter code: SUMO-interacting motif-containing protein 1 (1266 aa).

Residues 1-35 (MEDFIVISDDSGSESSAGTRSGRARRLRRALSRTP) are disordered. A compositionally biased stretch (basic residues) spans 22–31 (GRARRLRRAL). Residues 45-49 (FIDLT) carry the SUMO interaction motif 1 (SIM); mediates the binding to polysumoylated substrates motif. The SUMO interaction motif 2 (SIM); mediates the binding to polysumoylated substrates signature appears at 64–68 (VIDLT). 2 stretches are compositionally biased toward low complexity: residues 183–197 (SPFS…SSSN) and 532–553 (SSGG…VPQS). Disordered stretches follow at residues 183–206 (SPFS…PCPQ), 532–732 (SSGG…SGDV), 756–812 (NRHS…PGSA), and 1024–1052 (LTPP…PQPN). The segment covering 560–571 (SPGSVSQSSGDV) has biased composition (polar residues). Residues 764 to 777 (SAPSSPSCSANPLS) are compositionally biased toward low complexity. The interval 779–1266 (QSEFSSEKRP…NPDTEPASER (488 aa)) is interaction with SLF2. Residues 857 to 1266 (SKGQKLEPIP…NPDTEPASER (410 aa)) are required for inhibition of CAPN3 protease activity. The NSE5-like domain stretch occupies residues 865 to 1200 (IPHRRLRMVT…IDRKDLIIKR (336 aa)).

As to quaternary structure, forms a heterodimer with SLF2. Interacts (via SIM domains) with SUMO1 and SUMO2. Interacts with CAPN3 and CTBP1. Interacts with SMC6 and ZNF451.

The protein resides in the nucleus. The protein localises to the PML body. In terms of biological role, inhibits the protease activity of CAPN3. May play a role in SMC5-SMC6 complex recruitment for viral restriction. Forms a complex with SLF2 and this complex is required to recruit SMC5-SMC6 complex to PML nuclear bodies and sites of viral replication. The sequence is that of SUMO-interacting motif-containing protein 1 (Simc1) from Rattus norvegicus (Rat).